The following is a 377-amino-acid chain: SH2/SH3 adapter protein Nck1 (377 aa).

A2 carries the N-acetylalanine modification. In terms of domain architecture, SH3 1 spans 2 to 61; sequence AEEVVVVAKFDYVAQQEQELDIKKNERLWLLDDSKSWWRVRNSMNKTGFVPSNYVERKNS. Phosphoserine occurs at positions 85, 91, and 96. A Phosphotyrosine modification is found at Y105. Residues 106 to 165 enclose the SH3 2 domain; that stretch reads DLNMPAFVKFNYMAEREDELSLIKGTKVIVMEKCSDGWWRGSYNGQIGWFPSNYVTEEGD. S166 bears the Phosphoserine mark. Positions 190-252 constitute an SH3 3 domain; the sequence is QVLHVVQALY…PKNYVTIMQN (63 aa). Positions 282–376 constitute an SH2 domain; sequence WYYGKVTRHQ…GEKLYLVKHL (95 aa).

As to quaternary structure, interacts (via SH2 domain and SH3 domain 2) with EGFR. Interacts with PAK1 and SOS1. Interacts (via SH3 domains) with PKN2. Associates with BLNK, PLCG1, VAV1 and NCK1 in a B-cell antigen receptor-dependent fashion. Interacts with SOCS7. This interaction is required for nuclear import. Part of a complex containing PPP1R15B, PP1 and NCK1. Interacts with RALGPS1. Interacts with CAV2 (tyrosine phosphorylated form). Interacts with ADAM15. Interacts with FASLG. Directly interacts with RASA1. Interacts with isoform 4 of MINK1. Interacts with FLT1 (tyrosine phosphorylated). Interacts with KDR (tyrosine phosphorylated). Interacts (via SH2 domain) with EPHB1; activates the JUN cascade to regulate cell adhesion. Interacts with EPHA2. Interacts (via SH2 domain) with PDGFRB (tyrosine phosphorylated). Interacts with the inactive form of EIF2AK2/PKR. Interacts with PTPN1. Interacts with INSR/insulin receptor (in response to insulin stimulation); this interaction may mediate PTPN1 recruitment leading to INSR dephosphorylation. Interacts with CD3E (via Proline-rich sequence); the interaction is ligand dependent but independent of tyrosine kinase activation. Interacts with EGFR. Interacts with IRS1. Post-translationally, phosphorylated on Ser and Tyr residues. Phosphorylated in response to activation of EGFR and FcERI. Phosphorylated by activated PDGFRB.

It localises to the cytoplasm. The protein resides in the endoplasmic reticulum. Its subcellular location is the nucleus. Its function is as follows. Adapter protein which associates with tyrosine-phosphorylated growth factor receptors, such as KDR and PDGFRB, or their cellular substrates. Maintains low levels of EIF2S1 phosphorylation by promoting its dephosphorylation by PP1. Plays a role in the DNA damage response, not in the detection of the damage by ATM/ATR, but for efficient activation of downstream effectors, such as that of CHEK2. Plays a role in ELK1-dependent transcriptional activation in response to activated Ras signaling. Modulates the activation of EIF2AK2/PKR by dsRNA. May play a role in cell adhesion and migration through interaction with ephrin receptors. Also acts as an adpater protein for the T cell receptor complex (TCR-CD3E). Upon ligand engagement, is recruited by CD3E and promotes maturation of the immune synapse and T cell activation. The chain is SH2/SH3 adapter protein Nck1 (Nck1) from Mus musculus (Mouse).